The primary structure comprises 444 residues: tRNA modification GTPase MnmE (444 aa).

3 residues coordinate (6S)-5-formyl-5,6,7,8-tetrahydrofolate: R28, E86, and R126. The TrmE-type G domain occupies 224 to 368; that stretch reads GFCVVLAGAP…LLDAIQGSAA (145 aa). N234 is a K(+) binding site. Residues 234–239, 253–259, and 278–281 each bind GTP; these read NAGKST, SDIPGTT, and DTAG. S238 provides a ligand contact to Mg(2+). K(+) is bound by residues S253, I255, and T258. Position 259 (T259) interacts with Mg(2+). Residue K444 coordinates (6S)-5-formyl-5,6,7,8-tetrahydrofolate.

Belongs to the TRAFAC class TrmE-Era-EngA-EngB-Septin-like GTPase superfamily. TrmE GTPase family. As to quaternary structure, homodimer. Heterotetramer of two MnmE and two MnmG subunits. K(+) is required as a cofactor.

The protein localises to the cytoplasm. Functionally, exhibits a very high intrinsic GTPase hydrolysis rate. Involved in the addition of a carboxymethylaminomethyl (cmnm) group at the wobble position (U34) of certain tRNAs, forming tRNA-cmnm(5)s(2)U34. The chain is tRNA modification GTPase MnmE from Methylorubrum populi (strain ATCC BAA-705 / NCIMB 13946 / BJ001) (Methylobacterium populi).